The following is a 352-amino-acid chain: 4-hydroxy-3-methylbut-2-en-1-yl diphosphate synthase (flavodoxin) (352 aa).

Residues Cys-262, Cys-265, Cys-297, and Glu-304 each contribute to the [4Fe-4S] cluster site.

This sequence belongs to the IspG family. [4Fe-4S] cluster serves as cofactor.

It catalyses the reaction (2E)-4-hydroxy-3-methylbut-2-enyl diphosphate + oxidized [flavodoxin] + H2O + 2 H(+) = 2-C-methyl-D-erythritol 2,4-cyclic diphosphate + reduced [flavodoxin]. It functions in the pathway isoprenoid biosynthesis; isopentenyl diphosphate biosynthesis via DXP pathway; isopentenyl diphosphate from 1-deoxy-D-xylulose 5-phosphate: step 5/6. In terms of biological role, converts 2C-methyl-D-erythritol 2,4-cyclodiphosphate (ME-2,4cPP) into 1-hydroxy-2-methyl-2-(E)-butenyl 4-diphosphate. In Campylobacter curvus (strain 525.92), this protein is 4-hydroxy-3-methylbut-2-en-1-yl diphosphate synthase (flavodoxin).